The primary structure comprises 1224 residues: Dynactin subunit 1 (1224 aa).

The segment covering 1-10 (MAQSRRHPHG) has biased composition (basic residues). Residues 1–30 (MAQSRRHPHGRASSAGPRMSTEASSKPLKV) are disordered. Residues 49–91 (GATLXATGKWVGVILDEAKGKNDGTVQGRKYFTCEENHGIFVR) form the CAP-Gly domain. Disordered stretches follow at residues 100–217 (DGAD…RSQV), 374–402 (SASEKQEHVKLQKQMEKKNTELESLRQQR), and 888–918 (PHCHHEQDATAMQEGEYDADRPQSKPTPPAE). A compositionally biased stretch (basic residues) spans 117–146 (VPKRHSRXAAKGSKLRGAKPKKTTARRPKP). Low complexity predominate over residues 148–180 (RTPTSAPSSGTAGPSGSASASGGEMSSSEPSTP). Residues 205-540 (SPTKEEENLR…QEASAEKQQQ (336 aa)) adopt a coiled-coil conformation. A compositionally biased stretch (basic and acidic residues) spans 207–217 (TKEEENLRSQV). Coiled-coil stretches lie at residues 936–1042 (LKLE…EGLR) and 1081–1117 (KDSPLLLQQIEALQLSIRHLKNENNRLKGAQMKLELA). Residues 1203–1224 (WCSSSRARASPPASACSPPRPS) are disordered. Over residues 1204–1224 (CSSSRARASPPASACSPPRPS) the composition is skewed to low complexity.

This sequence belongs to the dynactin 150 kDa subunit family. As to quaternary structure, monomer and homodimer. Subunit of dynactin, a multiprotein complex part of a tripartite complex with dynein and a adapter, such as BICDL1, BICD2 or HOOK3. The dynactin complex is built around ACTR1A/ACTB filament and consists of an actin-related filament composed of a shoulder domain, a pointed end and a barbed end. Its length is defined by its flexible shoulder domain. The soulder is composed of 2 DCTN1 subunits, 4 DCTN2 and 2 DCTN3. DCTN1/p150(glued) binds directly to microtubules and to cytoplasmic dynein. In terms of tissue distribution, ubiquitously expressed.

It is found in the cytoplasm. The protein localises to the cytoskeleton. It localises to the microtubule organizing center. Its subcellular location is the centrosome. The protein resides in the centriole. It is found in the spindle. The protein localises to the cell cortex. Functionally, part of the dynactin complex that activates the molecular motor dynein for ultra-processive transport along microtubules. Plays a key role in dynein-mediated retrograde transport of vesicles and organelles along microtubules by recruiting and tethering dynein to microtubules. Binds to both dynein and microtubules providing a link between specific cargos, microtubules and dynein. Essential for targeting dynein to microtubule plus ends, recruiting dynein to membranous cargos and enhancing dynein processivity (the ability to move along a microtubule for a long distance without falling off the track). Can also act as a brake to slow the dynein motor during motility along the microtubule. Can regulate microtubule stability by promoting microtubule formation, nucleation and polymerization and by inhibiting microtubule catastrophe in neurons. Inhibits microtubule catastrophe by binding both to microtubules and to tubulin, leading to enhanced microtubule stability along the axon. Plays a role in metaphase spindle orientation. Plays a role in centriole cohesion and subdistal appendage organization and function. Its recruitment to the centriole in a KIF3A-dependent manner is essential for the maintenance of centriole cohesion and the formation of subdistal appendage. Also required for microtubule anchoring at the mother centriole. Plays a role in primary cilia formation. The sequence is that of Dynactin subunit 1 (DCTN1) from Gallus gallus (Chicken).